Here is a 249-residue protein sequence, read N- to C-terminus: AA9 family lytic polysaccharide monooxygenase cel61B (249 aa).

A signal peptide spans 1-19 (MKSCAILAALGCLAGSVLG). Position 20 (His20) interacts with Cu(2+). The N-linked (GlcNAc...) asparagine glycan is linked to Asn25. 2 cysteine pairs are disulfide-bonded: Cys78-Cys198 and Cys120-Cys124. His108 provides a ligand contact to Cu(2+). Residues His184 and Gln193 each contribute to the O2 site. Position 195 (Tyr195) interacts with Cu(2+).

This sequence belongs to the polysaccharide monooxygenase AA9 family. As to quaternary structure, monomer. Cu(2+) is required as a cofactor.

The protein resides in the secreted. The enzyme catalyses [(1-&gt;4)-beta-D-glucosyl]n+m + reduced acceptor + O2 = 4-dehydro-beta-D-glucosyl-[(1-&gt;4)-beta-D-glucosyl]n-1 + [(1-&gt;4)-beta-D-glucosyl]m + acceptor + H2O.. Functionally, lytic polysaccharide monooxygenase (LPMO) that depolymerizes crystalline and amorphous polysaccharides via the oxidation of scissile alpha- or beta-(1-4)-glycosidic bonds, yielding C1 or C4 oxidation products. Catalysis by LPMOs requires the reduction of the active-site copper from Cu(II) to Cu(I) by a reducing agent and H(2)O(2) or O(2) as a cosubstrate. The chain is AA9 family lytic polysaccharide monooxygenase cel61B from Hypocrea jecorina (strain QM6a) (Trichoderma reesei).